We begin with the raw amino-acid sequence, 504 residues long: Probable cytosol aminopeptidase (504 aa).

Residues K274 and D279 each coordinate Mn(2+). Residue K286 is part of the active site. Residues D297, D356, and E358 each contribute to the Mn(2+) site. R360 is a catalytic residue.

Belongs to the peptidase M17 family. Mn(2+) serves as cofactor.

It localises to the cytoplasm. The enzyme catalyses Release of an N-terminal amino acid, Xaa-|-Yaa-, in which Xaa is preferably Leu, but may be other amino acids including Pro although not Arg or Lys, and Yaa may be Pro. Amino acid amides and methyl esters are also readily hydrolyzed, but rates on arylamides are exceedingly low.. The catalysed reaction is Release of an N-terminal amino acid, preferentially leucine, but not glutamic or aspartic acids.. Functionally, presumably involved in the processing and regular turnover of intracellular proteins. Catalyzes the removal of unsubstituted N-terminal amino acids from various peptides. This Blochmanniella floridana protein is Probable cytosol aminopeptidase.